A 668-amino-acid chain; its full sequence is Packaging protein UL32 homolog (668 aa).

A compositionally biased stretch (polar residues) spans 1–10; that stretch reads MNPSTHVSSN. Residues 1–35 are disordered; the sequence is MNPSTHVSSNGPTTPPHGPHTTFLPPTSPAPSTSS. The segment covering 19–35 has biased composition (low complexity); sequence PHTTFLPPTSPAPSTSS. Cys-200, Cys-203, His-276, and Cys-282 together coordinate Zn(2+). The interval 200 to 282 is zinc finger 1; sequence CNLCAIISIC…FHLHFFINRC (83 aa). 2 stretches are compositionally biased toward basic and acidic residues: residues 392 to 401 and 410 to 419; these read SEREDARMMM and GEKGGDDPGR. The disordered stretch occupies residues 392 to 430; it reads SEREDARMMMEEEEDEEGGEKGGDDPGRHNGGGTSGGFS. Residues Cys-459, Cys-462, His-567, and Cys-574 each coordinate Zn(2+). A zinc finger 2 region spans residues 459–574; sequence CLLCELMACS…YKHFFCDPQC (116 aa).

The protein belongs to the herpesviridae UL32 protein family.

The protein resides in the host cytoplasm. It is found in the host nucleus. Functionally, plays a role in efficient localization of neo-synthesized capsids to nuclear replication compartments, thereby controlling cleavage and packaging of virus genomic DNA. In Homo sapiens (Human), this protein is Packaging protein UL32 homolog (UL52).